Reading from the N-terminus, the 327-residue chain is MQIKRSIEKIPGGMMLVPLFLGALCHTFSPEAGKYFGSFTNGMITGTVPILAVWFFCMGASIKLSATGTVLRKSGTLVVTKIAVAWVVAAIASRIIPEHGVEVGFFAGLSTLALVAAMDMTNGGLYASIMQQYGTKEEAGAFVLMSLESGPLMTMIILGTAGIASFEPHVFVGAVLPFLVGFALGNLDPELREFFSKAVQTLIPFFAFALGNTIDLTVIAQTGLLGILLGVAVIIVTGIPLIIADKLIGGGDGTAGIAASSSAGAAVATPVLIAEMVPAFKPMAPAATSLVATAVIVTSILVPILTSIWSRKVKARAAKIEILGTVK.

10 helical membrane passes run 10–30, 42–62, 73–93, 95–115, 139–159, 163–183, 199–219, 224–244, 254–274, and 289–309; these read IPGG…TFSP, GMIT…GASI, KSGT…AIAS, IIPE…LALV, AGAF…IILG, IASF…VGFA, VQTL…LTVI, LLGI…LIIA, TAGI…VLIA, and SLVA…TSIW.

It belongs to the KdgT transporter family.

The protein localises to the cell inner membrane. It catalyses the reaction 2-dehydro-3-deoxy-D-gluconate(in) + H(+)(in) = 2-dehydro-3-deoxy-D-gluconate(out) + H(+)(out). Catalyzes the proton-dependent uptake of 2-keto-3-deoxygluconate (KDG) into the cell. The chain is 2-keto-3-deoxygluconate permease from Escherichia coli O7:K1 (strain IAI39 / ExPEC).